Here is an 80-residue protein sequence, read N- to C-terminus: Lantibiotic Flvalpha.b (80 aa).

Positions 1–38 (MNKNPIYRSEEEAKNIACGNVAAELDENSQALDAINGA) are cleaved as a propeptide — cleaved by FlvT. 2 positions are modified to 2,3-didehydrobutyrine; by FlvM1: Thr43 and Thr47. Residues 52–55 (TVGC) constitute a cross-link (beta-methyllanthionine (Thr-Cys); by FlvM1). Positions 58–68 (SYGLGNGGYCC) form a cross-link, lanthionine (Ser-Cys); by FlvM1. 2 consecutive cross-links (beta-methyllanthionine (Thr-Cys); by FlvM1) follow at residues 69-74 (TYTVEC) and 71-78 (TVECSKTC).

The lanthionine formed by Ser-58 and Cys-68 forms a putative lipid II binding motif. Post-translationally, maturation of FlvA1 peptides involves the enzymatic conversion of Thr, and Ser into dehydrated AA and the formation of thioether bonds with cysteines. Modifications are processed by the flavecin synthetase FlvM1. This is followed by membrane translocation and cleavage of the modified precursor. In terms of processing, contains DL-lanthionine and DL-beta-methyllanthionine, when coepressed in E.coli with the flavecin synthetase FlvM1.

The protein localises to the secreted. Lanthionine-containing peptide antibiotic (lantibiotic) only active on Gram-positive bacteria in synergy with Flvbeta peptides, which are encoded by the same operon than Flvalpha.a. Shows antibacterial activity in synergy with Flvbeta.b, Flvbeta.c, Flvbeta.e and Flvbeta.g. Does not show antibacterial activity when tested with Flvbeta.a, Flvbeta.d, Flvbeta.f and Flvbeta.h. The bactericidal activity of lantibiotics is based on depolarization of energized bacterial cytoplasmic membranes, initiated by the formation of aqueous transmembrane pores. The polypeptide is Lantibiotic Flvalpha.b (Ruminococcus flavefaciens).